The chain runs to 196 residues: Auxin-induced protein 22B (196 aa).

An EAR-like (transcriptional repression) motif is present at residues 18–22; sequence LRLGL. The disordered stretch occupies residues 44–74; it reads RQVRETSQDSVSISKASHHQQHVETVSAPPP. The 88-residue stretch at 99 to 186 folds into the PB1 domain; that stretch reads GIFVKVSMDG…SCKRLRIMKG (88 aa).

This sequence belongs to the Aux/IAA family. As to quaternary structure, homodimers and heterodimers.

It is found in the nucleus. Aux/IAA proteins are short-lived transcriptional factors that function as repressors of early auxin response genes at low auxin concentrations. Repression is thought to result from the interaction with auxin response factors (ARFs), proteins that bind to the auxin-responsive promoter element (AuxRE). Formation of heterodimers with ARF proteins may alter their ability to modulate early auxin response genes expression. The chain is Auxin-induced protein 22B (AUX22B) from Vigna radiata var. radiata (Mung bean).